We begin with the raw amino-acid sequence, 458 residues long: Methionine aminopeptidase 2-2 (458 aa).

Over residues 1–14 (MGSKTPERDGHKGQ) the composition is skewed to basic and acidic residues. Positions 1-93 (MGSKTPERDG…QSSPPRVPLS (93 aa)) are disordered. The span at 67–82 (QKKKRKSKKKGKKKAA) shows a compositional bias: basic residues. Substrate is bound at residue His209. A divalent metal cation contacts are provided by Asp230, Asp241, and His310. Residue His318 coordinates substrate. 2 residues coordinate a divalent metal cation: Glu343 and Glu439.

It belongs to the peptidase M24A family. Methionine aminopeptidase eukaryotic type 2 subfamily. The cofactor is Co(2+). Requires Zn(2+) as cofactor. Mn(2+) serves as cofactor. It depends on Fe(2+) as a cofactor.

Its subcellular location is the cytoplasm. The enzyme catalyses Release of N-terminal amino acids, preferentially methionine, from peptides and arylamides.. Cotranslationally removes the N-terminal methionine from nascent proteins. The N-terminal methionine is often cleaved when the second residue in the primary sequence is small and uncharged (Met-Ala-, Cys, Gly, Pro, Ser, Thr, or Val). In Emericella nidulans (strain FGSC A4 / ATCC 38163 / CBS 112.46 / NRRL 194 / M139) (Aspergillus nidulans), this protein is Methionine aminopeptidase 2-2.